Consider the following 282-residue polypeptide: 4-diphosphocytidyl-2-C-methyl-D-erythritol kinase (282 aa).

The active site involves Lys12. Position 95 to 105 (Pro95 to Ser105) interacts with ATP. Residue Asp137 is part of the active site.

It belongs to the GHMP kinase family. IspE subfamily.

It catalyses the reaction 4-CDP-2-C-methyl-D-erythritol + ATP = 4-CDP-2-C-methyl-D-erythritol 2-phosphate + ADP + H(+). It functions in the pathway isoprenoid biosynthesis; isopentenyl diphosphate biosynthesis via DXP pathway; isopentenyl diphosphate from 1-deoxy-D-xylulose 5-phosphate: step 3/6. Catalyzes the phosphorylation of the position 2 hydroxy group of 4-diphosphocytidyl-2C-methyl-D-erythritol. This is 4-diphosphocytidyl-2-C-methyl-D-erythritol kinase from Pseudomonas paraeruginosa (strain DSM 24068 / PA7) (Pseudomonas aeruginosa (strain PA7)).